The chain runs to 479 residues: Putative F-box/LRR-repeat protein At1g56400 (479 aa).

The F-box domain maps to 12-60 (QDRLSNLPDVLLIMIISCLSFKECIRTSVLAKRWRYLCRETRNISFKET). LRR repeat units follow at residues 99–129 (YFSI…VLDF), 139–167 (CASR…KIYS), 186–211 (IGWI…SINY), 228–254 (VFES…KYSG), 287–312 (RTKL…SVCP), 342–367 (LHVM…TFDI), and 419–446 (LKFL…ELYM).

The polypeptide is Putative F-box/LRR-repeat protein At1g56400 (Arabidopsis thaliana (Mouse-ear cress)).